Here is a 120-residue protein sequence, read N- to C-terminus: PE family protein PE10 (120 aa).

The tract at residues 29–59 (GQVTGNGGSGNSGTSAAAANPNSDNTASIAD) is disordered. Over residues 40-51 (SGTSAAAANPNS) the composition is skewed to low complexity.

It belongs to the mycobacterial PE family. Forms a complex with PE9. The complex interacts with human TLR4.

The protein localises to the secreted. The protein resides in the cell wall. Functionally, together with PE9, induces macrophage apoptosis through human Toll-like receptor 4 (TLR4) signaling pathway. Interaction with TLR4 leads to increased levels of phospho-IRF-3, increase in the transcript levels of IFN-beta and pro-apoptotic genes, up-regulation of IL-10, down-regulation of IL-1b and enhanced levels of macrophage apoptosis. This chain is PE family protein PE10, found in Mycobacterium tuberculosis (strain ATCC 25618 / H37Rv).